The sequence spans 105 residues: Heat shock protein HspQ (105 aa).

A disordered region spans residues 76–105 (EMRDEHPEQPSMDELARTIRKQLQAPRLRN).

This sequence belongs to the HspQ family.

The protein localises to the cytoplasm. Functionally, involved in the degradation of certain denaturated proteins, including DnaA, during heat shock stress. The protein is Heat shock protein HspQ of Salmonella agona (strain SL483).